A 116-amino-acid polypeptide reads, in one-letter code: MRAIITFALFCVLYITVQAKTSSPKVQVYSHFPGEYGKENTLICHVSGFHPPDITIELLRNGEILPNTQQTDLAFEKGRQFHLTKSVSFTPERGLDYACKVRHMSNTNAYSWEPNM.

Positions 1–19 (MRAIITFALFCVLYITVQA) are cleaved as a signal peptide. Residues 24 to 111 (PKVQVYSHFP…RHMSNTNAYS (88 aa)) enclose the Ig-like C1-type domain. An intrachain disulfide couples Cys44 to Cys99.

The protein belongs to the beta-2-microglobulin family. In terms of assembly, heterodimer of an alpha chain and a beta chain. Beta-2-microglobulin is the beta-chain of major histocompatibility complex class I molecules.

It is found in the secreted. Functionally, component of the class I major histocompatibility complex (MHC). Involved in the presentation of peptide antigens to the immune system. In Labeobarbus intermedius (Lake tana barbels), this protein is Beta-2-microglobulin (b2m).